The primary structure comprises 409 residues: Probable plastid-lipid-associated protein 12, chloroplastic (409 aa).

The transit peptide at 1–55 directs the protein to the chloroplast; sequence MVAVRFYAVEMSLPCLCPCPSSPISLSLCSPRFNLLNTTSRRLGLSRNCRTLRIS.

The protein belongs to the PAP/fibrillin family.

It localises to the plastid. It is found in the chloroplast thylakoid. The polypeptide is Probable plastid-lipid-associated protein 12, chloroplastic (PAP12) (Arabidopsis thaliana (Mouse-ear cress)).